The sequence spans 493 residues: Protein translocase subunit SecY (493 aa).

Over 1–21 (MDSVIRALQPYFERIPSVERP) the chain is Cytoplasmic. The chain crosses the membrane as a helical span at residues 22–48 (KGHVHFREKFGWTAAILLLYFILSNVP). Topologically, residues 49–59 (VFGLSPESIDI) are extracellular. An intramembrane region (helical) is located at residues 60 to 67 (FAAYRALF). The chain crosses the membrane as a discontinuously helical span at residues 60 to 88 (FAAYRALFAGSTGSIIALGIGPIVTASII). The stretch at 68–79 (AGSTGSIIALGI) is an intramembrane region. The segment at residues 80 to 88 (GPIVTASII) is an intramembrane region (helical). The Cytoplasmic segment spans residues 89–109 (LQLLVGAGIIKLDLTNPEDRA). The helical transmembrane segment at 110 to 134 (AYQDFQRFLVFVMIAVEAIPQIAGG) threads the bilayer. Residues 135-151 (LLKPDLNLAAQLGVSPG) are Extracellular-facing. Residues 152–176 (IISFLIFIQLFIGGVLIVYMDEVVS) traverse the membrane as a helical segment. The Cytoplasmic segment spans residues 177–182 (KWGIGS). A helical membrane pass occupies residues 183–201 (GVSLFILAGIAQSIVVGLF). The Extracellular portion of the chain corresponds to 202-244 (NWVIPPNSAMPAGIIPRWIWIAQNYPLDQLFTGSGLAFLLIQG). The chain crosses the membrane as a helical span at residues 245–266 (GILALITTAAIILLVVFFEGTR). The Cytoplasmic segment spans residues 267–291 (VEIPLAHAVARGARGRFPIKLIYAS). Residues 292 to 313 (VLPMIFVRALQANVVALGQVLH) traverse the membrane as a helical segment. Residues 314–367 (ARGVTIFGEFVNGKAVSGLMFFLQPVSSPYDWIPSLVKSQGAAFAAIPDWMIYL) are Extracellular-facing. The helical transmembrane segment at 368–387 (HLLIDALILVVGGIIFAWFW) threads the bilayer. Residues 388-430 (VETSGMDARTVASQIAKSGMQVPGFRKSPQVLERVLSRYIPKV) are Cytoplasmic-facing. The chain crosses the membrane as a helical span at residues 431 to 449 (TILGGAIIGILTLVANMLG). At 450 to 454 (TIGNV) the chain is on the extracellular side. A helical membrane pass occupies residues 455–469 (SGTGLLLAVSIAYRF). The Cytoplasmic portion of the chain corresponds to 470 to 493 (YEDLAKEQLTEMHPLIRRMLGEEA).

The protein belongs to the SecY/SEC61-alpha family. Component of the Sec protein translocase complex. Heterotrimer consisting of alpha (SecY), beta (SecG) and gamma (SecE) subunits. The heterotrimers can form oligomers, although 1 heterotrimer is thought to be able to translocate proteins. Interacts with the ribosome. May interact with SecDF, and other proteins may be involved.

The protein resides in the cell membrane. In terms of biological role, the central subunit of the protein translocation channel SecYEG. Consists of two halves formed by TMs 1-5 and 6-10. These two domains form a lateral gate at the front which open onto the bilayer between TMs 2 and 7, and are clamped together by SecE at the back. The channel is closed by both a pore ring composed of hydrophobic SecY resides and a short helix (helix 2A) on the extracellular side of the membrane which forms a plug. The plug probably moves laterally to allow the channel to open. The ring and the pore may move independently. This Archaeoglobus fulgidus (strain ATCC 49558 / DSM 4304 / JCM 9628 / NBRC 100126 / VC-16) protein is Protein translocase subunit SecY.